The sequence spans 137 residues: MPPKPADKKPASKAPATASKAPEKKDAGKKTAASGDKKKRTKARKETYSSYIYKVLKQVHPDTGISNRAMSILNSFVNDIFERVATEASKLAAYNKKSTISSREIQTSVRLILPGELAKHAVSEGTKAVTKYSSSTK.

Residues 1–10 (MPPKPADKKP) are compositionally biased toward basic and acidic residues. Positions 1–45 (MPPKPADKKPASKAPATASKAPEKKDAGKKTAASGDKKKRTKARK) are disordered. N6-acetyllysine; alternate is present on residues Lys8 and Lys9. Glycyl lysine isopeptide (Lys-Gly) (interchain with G-Cter in SUMO); alternate cross-links involve residues Lys8 and Lys9. Ser12 is modified (phosphoserine). Lys13 is modified (N6-acetyllysine). Position 24 is an N6-acetyllysine; alternate (Lys24). Residue Lys24 forms a Glycyl lysine isopeptide (Lys-Gly) (interchain with G-Cter in SUMO); alternate linkage. A Glycyl lysine isopeptide (Lys-Gly) (interchain with G-Cter in SUMO) cross-link involves residue Lys25. Lys131 is covalently cross-linked (Glycyl lysine isopeptide (Lys-Gly) (interchain with G-Cter in ubiquitin)).

It belongs to the histone H2B family. As to quaternary structure, the nucleosome is a histone octamer containing two molecules each of H2A, H2B, H3 and H4 assembled in one H3-H4 heterotetramer and two H2A-H2B heterodimers. The octamer wraps approximately 147 bp of DNA. Post-translationally, monoubiquitinated by the ubc-2-bre-1 complex to form H2BK123ub1. H2BK123ub1 gives a specific tag for epigenetic transcriptional activation and is also prerequisite for H3K4me and H3K79me formation. H2BK123ub1 also modulates the formation of double-strand breaks during meiosis and is a prerequisite for DNA-damage checkpoint activation. In terms of processing, phosphorylated by ste-20 to form H2BS10ph during progression through meiotic prophase. May be correlated with chromosome condensation. Acetylated by gcn-5 to form H2BK11ac and H2BK16ac. H2BK16ac can also be formed by esa-1. Acetylation of N-terminal lysines and particularly formation of H2BK11acK16ac has a positive effect on transcription. Post-translationally, sumoylation to form H2BK6su or H2BK7su, and probably also H2BK16su or H2BK17su, occurs preferentially near the telomeres and represses gene transcription.

It is found in the nucleus. The protein localises to the chromosome. In terms of biological role, core component of nucleosome. Nucleosomes wrap and compact DNA into chromatin, limiting DNA accessibility to the cellular machineries which require DNA as a template. Histones thereby play a central role in transcription regulation, DNA repair, DNA replication and chromosomal stability. DNA accessibility is regulated via a complex set of post-translational modifications of histones, also called histone code, and nucleosome remodeling. This chain is Histone H2B (hh2b), found in Neurospora crassa (strain ATCC 24698 / 74-OR23-1A / CBS 708.71 / DSM 1257 / FGSC 987).